Consider the following 186-residue polypeptide: Protein GrpE (186 aa).

The span at 1–15 (MADEQQTLDQQTPEQ) shows a compositional bias: polar residues. The tract at residues 1–20 (MADEQQTLDQQTPEQPTGAA) is disordered.

Belongs to the GrpE family. In terms of assembly, homodimer.

It is found in the cytoplasm. Participates actively in the response to hyperosmotic and heat shock by preventing the aggregation of stress-denatured proteins, in association with DnaK and GrpE. It is the nucleotide exchange factor for DnaK and may function as a thermosensor. Unfolded proteins bind initially to DnaJ; upon interaction with the DnaJ-bound protein, DnaK hydrolyzes its bound ATP, resulting in the formation of a stable complex. GrpE releases ADP from DnaK; ATP binding to DnaK triggers the release of the substrate protein, thus completing the reaction cycle. Several rounds of ATP-dependent interactions between DnaJ, DnaK and GrpE are required for fully efficient folding. The chain is Protein GrpE from Pseudomonas aeruginosa (strain LESB58).